Consider the following 290-residue polypeptide: Undecaprenyl-diphosphatase (290 aa).

8 helical membrane passes run 5–25, 44–64, 88–108, 122–142, 152–172, 195–215, 226–246, and 255–275; these read IGIFEAIVLGFVQGITEYFPI, GTAYSAVIQLGSLLAVLTYFY, VRLFWGIILGTIPIVIAGLAL, LSVIAVASIVMAALLWLSESL, IRVIDGILIGCAQALALVPGV, FSFLLAIPAIFLSGLLELKVL, PIVAGFVSSTVFSYLAIAWLL, and LVFVIYRFFFGALLLGLLAAG.

This sequence belongs to the UppP family.

It localises to the cell inner membrane. It catalyses the reaction di-trans,octa-cis-undecaprenyl diphosphate + H2O = di-trans,octa-cis-undecaprenyl phosphate + phosphate + H(+). In terms of biological role, catalyzes the dephosphorylation of undecaprenyl diphosphate (UPP). Confers resistance to bacitracin. This Gloeobacter violaceus (strain ATCC 29082 / PCC 7421) protein is Undecaprenyl-diphosphatase.